The primary structure comprises 313 residues: Ribosomal protein L11 methyltransferase (313 aa).

4 residues coordinate S-adenosyl-L-methionine: Thr164, Gly185, Asp207, and Asn249.

The protein belongs to the methyltransferase superfamily. PrmA family.

Its subcellular location is the cytoplasm. The enzyme catalyses L-lysyl-[protein] + 3 S-adenosyl-L-methionine = N(6),N(6),N(6)-trimethyl-L-lysyl-[protein] + 3 S-adenosyl-L-homocysteine + 3 H(+). Its function is as follows. Methylates ribosomal protein L11. The sequence is that of Ribosomal protein L11 methyltransferase from Clostridium botulinum (strain Eklund 17B / Type B).